A 359-amino-acid chain; its full sequence is Dual-specificity RNA methyltransferase RlmN (359 aa).

The active-site Proton acceptor is E102. The Radical SAM core domain occupies 108 to 351 (EKKRATLCIS…IRKNRGSDIQ (244 aa)). C115 and C354 are oxidised to a cystine. Residues C122, C126, and C129 each coordinate [4Fe-4S] cluster. S-adenosyl-L-methionine is bound by residues 178–179 (GE), S210, 232–234 (SLH), and N311. The active-site S-methylcysteine intermediate is C354.

Belongs to the radical SAM superfamily. RlmN family. The cofactor is [4Fe-4S] cluster.

It is found in the cytoplasm. It catalyses the reaction adenosine(2503) in 23S rRNA + 2 reduced [2Fe-2S]-[ferredoxin] + 2 S-adenosyl-L-methionine = 2-methyladenosine(2503) in 23S rRNA + 5'-deoxyadenosine + L-methionine + 2 oxidized [2Fe-2S]-[ferredoxin] + S-adenosyl-L-homocysteine. The catalysed reaction is adenosine(37) in tRNA + 2 reduced [2Fe-2S]-[ferredoxin] + 2 S-adenosyl-L-methionine = 2-methyladenosine(37) in tRNA + 5'-deoxyadenosine + L-methionine + 2 oxidized [2Fe-2S]-[ferredoxin] + S-adenosyl-L-homocysteine. Functionally, specifically methylates position 2 of adenine 2503 in 23S rRNA and position 2 of adenine 37 in tRNAs. m2A2503 modification seems to play a crucial role in the proofreading step occurring at the peptidyl transferase center and thus would serve to optimize ribosomal fidelity. The chain is Dual-specificity RNA methyltransferase RlmN from Buchnera aphidicola subsp. Cinara cedri (strain Cc).